A 209-amino-acid polypeptide reads, in one-letter code: Max dimerization protein 4 (209 aa).

Residues Leu6–Ala23 form an interaction with SIN3A and SIN3B region. Residues Asn53–Leu105 form the bHLH domain. Residues Ser137–Ser209 are disordered. Residues Asp153–Gly163 show a composition bias toward acidic residues. Polar residues predominate over residues Ser185 to Ser195.

In terms of assembly, efficient DNA binding requires dimerization with another bHLH protein. Binds DNA as a heterodimer with MAX. Interacts with SIN3A AND SIN3B. Interacts with RNF17.

It localises to the nucleus. Transcriptional repressor. Binds with MAX to form a sequence-specific DNA-binding protein complex which recognizes the core sequence 5'-CAC[GA]TG-3'. Antagonizes MYC transcriptional activity by competing for MAX and suppresses MYC dependent cell transformation. The protein is Max dimerization protein 4 (Mxd4) of Mus musculus (Mouse).